We begin with the raw amino-acid sequence, 540 residues long: Collagen alpha-1(XXIII) chain (540 aa).

Residues 1–26 (MGPGERAGGGGDAGKGNAAGGGGGGR) are compositionally biased toward gly residues. Residues 1–28 (MGPGERAGGGGDAGKGNAAGGGGGGRSA) form a disordered region. The Cytoplasmic segment spans residues 1-34 (MGPGERAGGGGDAGKGNAAGGGGGGRSATTAGSR). The chain crosses the membrane as a helical; Signal-anchor for type II membrane protein span at residues 35–56 (AVSALCLLLSVGSAAACLLLGV). Residues 57-540 (QAAALQGRVA…GLPVPGCWHK (484 aa)) are Extracellular-facing. Disordered stretches follow at residues 109 to 304 (AREA…GEQG) and 316 to 540 (LDAL…CWHK). Collagen-like domains follow at residues 124 to 243 (GRRG…PGKK), 251 to 305 (QPGP…EQGD), 321 to 380 (GPPG…MGLS), 412 to 460 (GPPG…GPPG), and 463 to 522 (GLPG…PGLD). 2 stretches are compositionally biased toward low complexity: residues 140-156 (QSGR…DGKP) and 168-183 (PGDF…DGAA). Residues 185 to 195 (PPGPPGPPGAR) show a composition bias toward pro residues. Over residues 322-334 (PPGPQGPPGPPGI) the composition is skewed to pro residues. The span at 350 to 362 (DGEKGPKGQKGDP) shows a compositional bias: basic and acidic residues. The segment covering 411 to 422 (PGPPGPPGPPGP) has biased composition (pro residues). 2 stretches are compositionally biased toward basic and acidic residues: residues 435–444 (DGAKGEKGAS) and 486–503 (RGEK…ERGV).

Homotrimer. Post-translationally, undergoes proteolytic cleavage by furin protease to yield a 60 kDa soluble form that forms a homotrimer and exhibits a low affinity interaction with heparin.

The protein resides in the cell membrane. In Homo sapiens (Human), this protein is Collagen alpha-1(XXIII) chain (COL23A1).